The primary structure comprises 283 residues: ATP phosphoribosyltransferase (283 aa).

It belongs to the ATP phosphoribosyltransferase family. Long subfamily. Requires Mg(2+) as cofactor.

Its subcellular location is the cytoplasm. It carries out the reaction 1-(5-phospho-beta-D-ribosyl)-ATP + diphosphate = 5-phospho-alpha-D-ribose 1-diphosphate + ATP. The protein operates within amino-acid biosynthesis; L-histidine biosynthesis; L-histidine from 5-phospho-alpha-D-ribose 1-diphosphate: step 1/9. Its activity is regulated as follows. Feedback inhibited by histidine. Its function is as follows. Catalyzes the condensation of ATP and 5-phosphoribose 1-diphosphate to form N'-(5'-phosphoribosyl)-ATP (PR-ATP). Has a crucial role in the pathway because the rate of histidine biosynthesis seems to be controlled primarily by regulation of HisG enzymatic activity. The chain is ATP phosphoribosyltransferase from Bacteroides thetaiotaomicron (strain ATCC 29148 / DSM 2079 / JCM 5827 / CCUG 10774 / NCTC 10582 / VPI-5482 / E50).